We begin with the raw amino-acid sequence, 263 residues long: MAGLTDKALVRERFRRTLGSYAGEAAVQRAMAQELVSMAARHASGIHFERVLEVGSGSGMLTELMLEAFSIERYTANDLVEESRECLQGIMDRHPEVVFNFLGGDVESLPFLPERRDLVVSNATLQWLDDLETFLGRIADSMAPGGLFLFTSFSSSNMQEIAAILGTALTYRSIAETGELCERYFEVLELREAEITLTFSSPEAVLRHISRTGVNALARKPWTKGRQKEFSDRYRSMFSQAEGVRLTYNPVYCCLRKRQEGSL.

It belongs to the methyltransferase superfamily.

The catalysed reaction is malonyl-[ACP] + S-adenosyl-L-methionine = malonyl-[ACP] methyl ester + S-adenosyl-L-homocysteine. Its pathway is cofactor biosynthesis; biotin biosynthesis. Converts the free carboxyl group of a malonyl-thioester to its methyl ester by transfer of a methyl group from S-adenosyl-L-methionine (SAM). It allows to synthesize pimeloyl-ACP via the fatty acid synthetic pathway. This is Malonyl-[acyl-carrier protein] O-methyltransferase from Chlorobium luteolum (strain DSM 273 / BCRC 81028 / 2530) (Pelodictyon luteolum).